The sequence spans 699 residues: tRNA 5-methylaminomethyl-2-thiouridine biosynthesis bifunctional protein MnmC (699 aa).

The segment at 1–260 is tRNA (mnm(5)s(2)U34)-methyltransferase; sequence MTAKPHISCQ…ERKLLRQQAN (260 aa). An FAD-dependent cmnm(5)s(2)U34 oxidoreductase region spans residues 282–699; it reads IGGGLASAHL…LRKLLKGKAL (418 aa).

This sequence in the N-terminal section; belongs to the methyltransferase superfamily. tRNA (mnm(5)s(2)U34)-methyltransferase family. The protein in the C-terminal section; belongs to the DAO family. Requires FAD as cofactor.

The protein localises to the cytoplasm. The enzyme catalyses 5-aminomethyl-2-thiouridine(34) in tRNA + S-adenosyl-L-methionine = 5-methylaminomethyl-2-thiouridine(34) in tRNA + S-adenosyl-L-homocysteine + H(+). In terms of biological role, catalyzes the last two steps in the biosynthesis of 5-methylaminomethyl-2-thiouridine (mnm(5)s(2)U) at the wobble position (U34) in tRNA. Catalyzes the FAD-dependent demodification of cmnm(5)s(2)U34 to nm(5)s(2)U34, followed by the transfer of a methyl group from S-adenosyl-L-methionine to nm(5)s(2)U34, to form mnm(5)s(2)U34. In Shewanella oneidensis (strain ATCC 700550 / JCM 31522 / CIP 106686 / LMG 19005 / NCIMB 14063 / MR-1), this protein is tRNA 5-methylaminomethyl-2-thiouridine biosynthesis bifunctional protein MnmC.